Here is a 290-residue protein sequence, read N- to C-terminus: uncharacterized protein (290 aa).

The protein resides in the cell membrane. Its subcellular location is the membrane raft. This is an uncharacterized protein from Bacillus subtilis (strain 168).